Consider the following 306-residue polypeptide: D-alanine--D-alanine ligase (306 aa).

One can recognise an ATP-grasp domain in the interval 105-300; the sequence is KMIWQAAGIS…FDELVIQILE (196 aa). 131-186 contacts ATP; the sequence is TDRLGLPLIIKPAREGSTIGLNKVDYAQDMQSAYQTAAQHDSLVIAEQFIQGIELT. Mg(2+) contacts are provided by D254, E267, and N269.

Belongs to the D-alanine--D-alanine ligase family. Mg(2+) is required as a cofactor. It depends on Mn(2+) as a cofactor.

The protein resides in the cytoplasm. The catalysed reaction is 2 D-alanine + ATP = D-alanyl-D-alanine + ADP + phosphate + H(+). It functions in the pathway cell wall biogenesis; peptidoglycan biosynthesis. Functionally, cell wall formation. The polypeptide is D-alanine--D-alanine ligase (Nitrosomonas eutropha (strain DSM 101675 / C91 / Nm57)).